The sequence spans 447 residues: Gamma-glutamyl phosphate reductase (447 aa).

It belongs to the gamma-glutamyl phosphate reductase family.

The protein localises to the cytoplasm. The enzyme catalyses L-glutamate 5-semialdehyde + phosphate + NADP(+) = L-glutamyl 5-phosphate + NADPH + H(+). It functions in the pathway amino-acid biosynthesis; L-proline biosynthesis; L-glutamate 5-semialdehyde from L-glutamate: step 2/2. In terms of biological role, catalyzes the NADPH-dependent reduction of L-glutamate 5-phosphate into L-glutamate 5-semialdehyde and phosphate. The product spontaneously undergoes cyclization to form 1-pyrroline-5-carboxylate. This chain is Gamma-glutamyl phosphate reductase, found in Methanosarcina barkeri (strain Fusaro / DSM 804).